Here is a 147-residue protein sequence, read N- to C-terminus: Large ribosomal subunit protein uL15 (147 aa).

The span at 1–28 shows a compositional bias: basic residues; sequence MIRRRKKVRKLRGSHTHGWGCKKKHRGG. The tract at residues 1–43 is disordered; the sequence is MIRRRKKVRKLRGSHTHGWGCKKKHRGGGSKGGRGMAGTGKRN. Over residues 29-38 the composition is skewed to gly residues; the sequence is GSKGGRGMAG.

Belongs to the universal ribosomal protein uL15 family. As to quaternary structure, part of the 50S ribosomal subunit.

Functionally, binds to the 23S rRNA. The chain is Large ribosomal subunit protein uL15 from Pyrococcus furiosus (strain ATCC 43587 / DSM 3638 / JCM 8422 / Vc1).